The primary structure comprises 503 residues: Cytochrome P450 11B2, mitochondrial (503 aa).

The transit peptide at 1–24 (MALRAKAEVCVAAPWLSLQRARAL) directs the protein to the mitochondrion. Phe-381 lines the 21-hydroxyprogesterone pocket. Cys-450 is a heme binding site.

It belongs to the cytochrome P450 family. Heme serves as cofactor. Expressed sporadically in the zona glomerulosa (zG) of the adrenal cortex (conventional zonation), as well as in aldosterone-producing cell clusters (APCCs) composed of morphological zG cells in contact with the capsule (variegated zonation).

It localises to the mitochondrion inner membrane. It carries out the reaction a steroid + 2 reduced [adrenodoxin] + O2 + 2 H(+) = an 11beta-hydroxysteroid + 2 oxidized [adrenodoxin] + H2O. The catalysed reaction is 21-hydroxyprogesterone + 2 reduced [adrenodoxin] + O2 + 2 H(+) = corticosterone + 2 oxidized [adrenodoxin] + H2O. The enzyme catalyses corticosterone + 2 reduced [adrenodoxin] + O2 + 2 H(+) = 18-hydroxycorticosterone + 2 oxidized [adrenodoxin] + H2O. It catalyses the reaction 18-hydroxycorticosterone + 2 reduced [adrenodoxin] + O2 + 2 H(+) = aldosterone + 2 oxidized [adrenodoxin] + 2 H2O. It carries out the reaction 11-deoxycortisol + 2 reduced [adrenodoxin] + O2 + 2 H(+) = cortisol + 2 oxidized [adrenodoxin] + H2O. The catalysed reaction is 21-hydroxyprogesterone + 2 reduced [adrenodoxin] + O2 + 2 H(+) = 18-hydroxy-11-deoxycorticosterone + 2 oxidized [adrenodoxin] + H2O. The enzyme catalyses cortisol + 2 reduced [adrenodoxin] + O2 + 2 H(+) = 18-hydroxycortisol + 2 oxidized [adrenodoxin] + H2O. It catalyses the reaction 18-hydroxycortisol + 2 reduced [adrenodoxin] + O2 + 2 H(+) = 18-oxocortisol + 2 oxidized [adrenodoxin] + 2 H2O. It participates in steroid biosynthesis. A cytochrome P450 monooxygenase that catalyzes the biosynthesis of aldosterone, the main mineralocorticoid in the human body responsible for salt and water homeostasis, thus involved in blood pressure regulation, arterial hypertension, and the development of heart failure. Catalyzes three sequential oxidative reactions of 11-deoxycorticosterone (21-hydroxyprogesterone), namely 11-beta hydroxylation, followed by two successive oxidations at C18 yielding 18-hydroxy and then 18-oxo intermediates (that would not leave the enzyme active site during the consecutive hydroxylation reactions), ending with the formation of aldosterone. Can also produce 18-hydroxycortisol and 18-oxocortisol, derived from successive oxidations of cortisol at C18, normally found at very low levels, but significantly increased in primary aldosteronism, the most common form of secondary hypertension. Mechanistically, uses molecular oxygen inserting one oxygen atom into a substrate and reducing the second into a water molecule. Two electrons are provided by NADPH via a two-protein mitochondrial transfer system comprising flavoprotein FDXR (adrenodoxin/ferredoxin reductase) and nonheme iron-sulfur protein FDX1 or FDX2 (adrenodoxin/ferredoxin). Could also be involved in the androgen metabolic pathway. The chain is Cytochrome P450 11B2, mitochondrial from Homo sapiens (Human).